The following is a 257-amino-acid chain: 7-carboxy-7-deazaguanine synthase (257 aa).

Substrate-binding positions include 29–31 (LQG) and Arg-44. Residues 35–253 (LAGTPSVFVR…PRLHVALWND (219 aa)) enclose the Radical SAM core domain. [4Fe-4S] cluster-binding residues include Cys-48, Cys-52, and Cys-55. Ser-57 provides a ligand contact to Mg(2+). Thr-90 provides a ligand contact to substrate. Residue Gly-92 coordinates S-adenosyl-L-methionine. Positions 133 to 153 (VSPKLASSTPTAETDPKGDGE) are disordered.

The protein belongs to the radical SAM superfamily. 7-carboxy-7-deazaguanine synthase family. Homodimer. [4Fe-4S] cluster serves as cofactor. It depends on S-adenosyl-L-methionine as a cofactor. Mg(2+) is required as a cofactor.

It carries out the reaction 6-carboxy-5,6,7,8-tetrahydropterin + H(+) = 7-carboxy-7-deazaguanine + NH4(+). It participates in purine metabolism; 7-cyano-7-deazaguanine biosynthesis. Its function is as follows. Catalyzes the complex heterocyclic radical-mediated conversion of 6-carboxy-5,6,7,8-tetrahydropterin (CPH4) to 7-carboxy-7-deazaguanine (CDG), a step common to the biosynthetic pathways of all 7-deazapurine-containing compounds. This is 7-carboxy-7-deazaguanine synthase from Halobacterium salinarum (strain ATCC 29341 / DSM 671 / R1).